We begin with the raw amino-acid sequence, 120 residues long: uncharacterized protein (120 aa).

A signal peptide spans 1 to 16 (MFKFILLCFCINFAFS).

This is an uncharacterized protein from Acheta domesticus (House cricket).